The chain runs to 292 residues: MTTTEEALTFESTSKFAQVRPHLKLHYHEAGVGNDTTIVLLHGGGPGASSWSNFARNIPVLAEKFHVLAVDQPGYGLSDKPTEHPQYFVHSASALKDLLDTLGVGGRVHLLGNSLGGGAAVRFALDYPDRAGRLVLMGPGGLSVNLFAPDPTEGVKNLGKFGYQPTRENLEAFLRIMVFDQKLITDELIDERFAAASTPESLAAAKAMGKSFSSADFELGMLWRDAYKLRQRVLLIWGREDRVNPLDGALVALKMIPRAQLHVFGGCGHWAQLEKFDEFNRLATDFLLDGGK.

Residues 44–45 (GG), Asn53, Asn113, and Arg192 each bind substrate. His269 acts as the Proton acceptor in catalysis. A substrate-binding site is contributed by Trp270.

Belongs to the AB hydrolase superfamily. HsaD family. In terms of assembly, homodimer.

The catalysed reaction is (1E,2Z)-3-hydroxy-5,9,17-trioxo-4,5:9,10-disecoandrosta-1(10),2-dien-4-oate + H2O = 3-[(3aS,4S,7aS)-7a-methyl-1,5-dioxo-octahydro-1H-inden-4-yl]propanoate + (2Z,4Z)-2-hydroxyhexa-2,4-dienoate + H(+). Its pathway is lipid metabolism; steroid biosynthesis. Functionally, catalyzes the hydrolysis of a carbon-carbon bond in 4,5: 9,10-diseco-3-hydroxy-5,9,17-trioxoandrosta-1(10),2-diene-4-oate (4,9-DSHA) to yield 9,17-dioxo-1,2,3,4,10,19-hexanorandrostan-5-oate (DOHNAA) and 2-hydroxy-hexa-2,4-dienoate (HHD). Also involved in biphenyl and polychlorinated biphenyls (PCBs) degradation. This Rhodococcus jostii (strain RHA1) protein is 4,5:9,10-diseco-3-hydroxy-5,9,17-trioxoandrosta-1(10),2-diene-4-oate hydrolase (hsaD).